A 393-amino-acid chain; its full sequence is MTSYSDKGEKPERGRFLHFHSVTFWVGNAKQAASYYCSKIGFEPLAYKGLETGSREVVSHVVKQDKIVFVFSSALNPWNKEMGDHLVKHGDGVKDIAFEVEDCDYIVQKARERGAIIVREEVCCAADVRGHHTPLDRARQVWEGTLVEKMTFCLDSRPQPSQTLLHRLLLSKLPKCGLEIIDHIVGNQPDQEMESASQWYMRNLQFHRFWSVDDTQIHTEYSALRSVVMANYEESIKMPINEPAPGKKKSQIQEYVDYNGGAGVQHIALKTEDIITAIRSLRERGVEFLAVPFTYYKQLQEKLKSAKIRVKESIDVLEELKILVDYDEKGYLLQIFTKPMQDRPTVFLEVIQRNNHQGFGAGNFNSLFKAFEEEQELRGNLTDTDPNGVPFRL.

At Thr-2 the chain carries N-acetylthreonine. 2 VOC domains span residues 18-152 (HFHS…KMTF) and 180-338 (IIDH…IFTK). His-183 contacts Fe cation. A phosphoserine mark is found at Ser-211, Ser-226, and Ser-250. 2 residues coordinate Fe cation: His-266 and Glu-349.

Belongs to the 4HPPD family. In terms of assembly, homodimer. It depends on Fe cation as a cofactor. As to expression, liver.

The protein localises to the cytoplasm. Its subcellular location is the endoplasmic reticulum membrane. It is found in the golgi apparatus membrane. The catalysed reaction is 3-(4-hydroxyphenyl)pyruvate + O2 = homogentisate + CO2. It participates in amino-acid degradation; L-phenylalanine degradation; acetoacetate and fumarate from L-phenylalanine: step 3/6. Catalyzes the conversion of 4-hydroxyphenylpyruvic acid to homogentisic acid, one of the steps in tyrosine catabolism. This is 4-hydroxyphenylpyruvate dioxygenase (HPD) from Sus scrofa (Pig).